A 478-amino-acid polypeptide reads, in one-letter code: MTSRYEVVIGLEVHVQLTTQTKIFCNCSIAFGNQPNSQTCPVCLGLPGALPVLNRKVVEYAIKTGLATNCSIAPRSIFARKNYFYPDLPKGYQISQFELPICEHGRLDIDVDGTSKSIGITRIHMEEDAGKLLHDDGDTSRVDLNRACTPLMEIVSEPDMRSSDEAIAYLKKLHQIVVYLGVCDGNLEEGSFRCDANVSIRPWGQKEFGTRAELKNINSFRFIKQAIDYEIERQADILDDGGTVVQETRLFDTASGTTRSMRSKEEAHDYRYFPDPDLVPLIVSDDWVEQIRRELPELPEAKIARFVGELGIPQYDAEVLAADRAMAEYYDSLVKAHGNAKLCANWVMGELQRALNDSGAGIAECPVTPPMLAGILQRIDDNTISNKIAKTVFDAMWQSGKDADTIIEEQGLKQVTDTGAIEAVIDEVLAANPSQVEEYRGGKDKLMGFFVGQVMRATKGKANPKTLNELLKKKLTGE.

The protein belongs to the GatB/GatE family. GatB subfamily. In terms of assembly, heterotrimer of A, B and C subunits.

The enzyme catalyses L-glutamyl-tRNA(Gln) + L-glutamine + ATP + H2O = L-glutaminyl-tRNA(Gln) + L-glutamate + ADP + phosphate + H(+). The catalysed reaction is L-aspartyl-tRNA(Asn) + L-glutamine + ATP + H2O = L-asparaginyl-tRNA(Asn) + L-glutamate + ADP + phosphate + 2 H(+). Functionally, allows the formation of correctly charged Asn-tRNA(Asn) or Gln-tRNA(Gln) through the transamidation of misacylated Asp-tRNA(Asn) or Glu-tRNA(Gln) in organisms which lack either or both of asparaginyl-tRNA or glutaminyl-tRNA synthetases. The reaction takes place in the presence of glutamine and ATP through an activated phospho-Asp-tRNA(Asn) or phospho-Glu-tRNA(Gln). In Syntrophotalea carbinolica (strain DSM 2380 / NBRC 103641 / GraBd1) (Pelobacter carbinolicus), this protein is Aspartyl/glutamyl-tRNA(Asn/Gln) amidotransferase subunit B.